We begin with the raw amino-acid sequence, 489 residues long: Betaine aldehyde dehydrogenase (489 aa).

Residues T26 and D93 each coordinate K(+). 150–152 is a binding site for NAD(+); sequence GAW. Residue K162 is the Charge relay system of the active site. NAD(+) is bound at residue 176-179; that stretch reads KPSE. V180 contacts K(+). 229–232 is an NAD(+) binding site; that stretch reads GVET. Position 245 (L245) interacts with K(+). E251 functions as the Proton acceptor in the catalytic mechanism. NAD(+) is bound by residues G253, C285, and E386. Catalysis depends on C285, which acts as the Nucleophile. Position 285 is a cysteine sulfenic acid (-SOH) (C285). Positions 456 and 459 each coordinate K(+). E463 serves as the catalytic Charge relay system.

Belongs to the aldehyde dehydrogenase family. Dimer of dimers. The cofactor is K(+).

The catalysed reaction is betaine aldehyde + NAD(+) + H2O = glycine betaine + NADH + 2 H(+). It functions in the pathway amine and polyamine biosynthesis; betaine biosynthesis via choline pathway; betaine from betaine aldehyde: step 1/1. In terms of biological role, involved in the biosynthesis of the osmoprotectant glycine betaine. Catalyzes the irreversible oxidation of betaine aldehyde to the corresponding acid. The protein is Betaine aldehyde dehydrogenase of Burkholderia ambifaria (strain ATCC BAA-244 / DSM 16087 / CCUG 44356 / LMG 19182 / AMMD) (Burkholderia cepacia (strain AMMD)).